Consider the following 234-residue polypeptide: CKLF-like MARVEL transmembrane domain-containing protein 4 (234 aa).

A compositionally biased stretch (acidic residues) spans 1-11; sequence MRSGEELDGFE. The interval 1–38 is disordered; sequence MRSGEELDGFEGEASSTSMISGASSPYQPTTEPVSQRR. Low complexity predominate over residues 15–25; the sequence is SSTSMISGASS. Residues 49–176 form the MARVEL domain; that stretch reads YLRGALGRLK…NTFLAVQKWR (128 aa). 4 helical membrane-spanning segments follow: residues 59-79, 85-105, 123-143, and 151-171; these read VAQV…MACS, YFFE…LIMF, LVNT…LAAL, and IAAV…TFLA. S194 is subject to Phosphoserine.

This sequence belongs to the chemokine-like factor family. Interacts with PD-L1/CD274 and CMTM6. Highly expressed in testis and prostate.

Its subcellular location is the membrane. Acts as a backup for CMTM6 to regulate plasma membrane expression of PD-L1/CD274, an immune inhibitory ligand critical for immune tolerance to self and antitumor immunity. May protect PD-L1/CD274 from being polyubiquitinated and targeted for degradation. The chain is CKLF-like MARVEL transmembrane domain-containing protein 4 from Homo sapiens (Human).